The chain runs to 457 residues: Putative methyltransferase MT1451 (457 aa).

S-adenosyl-L-methionine-binding positions include 276–282 (CAGPGGK), Glu-301, Asp-325, and Asp-341. Cys-394 acts as the Nucleophile in catalysis.

It belongs to the class I-like SAM-binding methyltransferase superfamily. RsmB/NOP family.

Its function is as follows. May act as RNA methyltransferase. In Mycobacterium tuberculosis (strain CDC 1551 / Oshkosh), this protein is Putative methyltransferase MT1451.